A 1358-amino-acid chain; its full sequence is Insulin-like growth factor 1 receptor (1358 aa).

The N-terminal stretch at 1-25 is a signal peptide; sequence MKAELVPVCTAWILGLLLCLGPAAA. A disulfide bridge links cysteine 28 with cysteine 47. N-linked (GlcNAc...) asparagine glycans are attached at residues asparagine 74, asparagine 99, and asparagine 132. 13 disulfide bridges follow: cysteine 147/cysteine 175, cysteine 179/cysteine 202, cysteine 189/cysteine 208, cysteine 212/cysteine 221, cysteine 216/cysteine 227, cysteine 228/cysteine 236, cysteine 232/cysteine 245, cysteine 248/cysteine 257, cysteine 261/cysteine 273, cysteine 279/cysteine 299, cysteine 303/cysteine 317, cysteine 320/cysteine 324, and cysteine 328/cysteine 347. Asparagine 241 carries N-linked (GlcNAc...) asparagine glycosylation. A glycan (N-linked (GlcNAc...) asparagine) is linked at asparagine 310. N-linked (GlcNAc...) asparagine glycosylation is found at asparagine 411 and asparagine 432. Cysteine 449 and cysteine 482 are disulfide-bonded. Fibronectin type-III domains follow at residues 483–603, 604–702, 727–818, and 829–924; these read ESHV…TDAA, VPSI…TEAE, PRPN…FVFA, and IPGI…LKPD. Residues asparagine 488, asparagine 528, asparagine 616, asparagine 634, and asparagine 669 are each glycosylated (N-linked (GlcNAc...) asparagine). The interval 670–691 is disordered; sequence GTIDTEGGTEPTKPEGSVGEKG. Residues 735–934 lie on the Extracellular side of the membrane; that stretch reads DVLAVGNSTV…VRNNILQMVV (200 aa). N-linked (GlcNAc...) asparagine glycans are attached at residues asparagine 741, asparagine 750, asparagine 758, asparagine 895, and asparagine 908. A helical membrane pass occupies residues 935-955; sequence AIPLALSFLLVGIISIVCFVF. Residues 956–1358 are Cytoplasmic-facing; the sequence is KKRNSNRLGN…ALPLPQSSAC (403 aa). Phosphotyrosine; by autocatalysis is present on tyrosine 976. The Protein kinase domain maps to 995 to 1270; it reads ITMNRELGQG…SIKDELDPGF (276 aa). ATP is bound by residues 1001-1009 and lysine 1029; that span reads LGQGSFGMV. The Proton acceptor role is filled by aspartate 1131. Phosphotyrosine; by autocatalysis occurs at positions 1157, 1161, and 1162. The interval 1336-1358 is disordered; the sequence is PYAHMNGGRKNERALPLPQSSAC.

It belongs to the protein kinase superfamily. Tyr protein kinase family. Insulin receptor subfamily. As to quaternary structure, tetramer of 2 alpha and 2 beta chains linked by disulfide bonds. The alpha chains contribute to the formation of the ligand-binding domain, while the beta chain carries the kinase domain. Mn(2+) is required as a cofactor. In terms of processing, the cytoplasmic domain of the beta subunit is autophosphorylated on Tyr residues in response to low concentrations of insulin-like growth factor (IGF1) and higher concentrations of insulin.

It is found in the cell membrane. It carries out the reaction L-tyrosyl-[protein] + ATP = O-phospho-L-tyrosyl-[protein] + ADP + H(+). Autophosphorylation activates the kinase activity. Its function is as follows. This receptor binds insulin-like growth factor 1 (IGF1) with a high affinity and IGF2 with a lower affinity. It has a tyrosine-protein kinase activity, which is necessary for the activation of the IGF1-stimulated downstream signaling cascade. Plays a role in oocyte maturation. Promotes head development by inhibiting Wnt signaling during embryogenesis. This Xenopus laevis (African clawed frog) protein is Insulin-like growth factor 1 receptor (igf1r).